Here is a 338-residue protein sequence, read N- to C-terminus: Heat-inducible transcription repressor HrcA (338 aa).

Belongs to the HrcA family.

Its function is as follows. Negative regulator of class I heat shock genes (grpE-dnaK-dnaJ and groELS operons). Prevents heat-shock induction of these operons. The chain is Heat-inducible transcription repressor HrcA from Thermotoga petrophila (strain ATCC BAA-488 / DSM 13995 / JCM 10881 / RKU-1).